A 226-amino-acid polypeptide reads, in one-letter code: LexA repressor (226 aa).

A DNA-binding region (H-T-H motif) is located at residues 28–48 (RAEICQSLGFRSPNAAESHLR). Residues Ser133 and Lys170 each act as for autocatalytic cleavage activity in the active site.

This sequence belongs to the peptidase S24 family. As to quaternary structure, homodimer.

The catalysed reaction is Hydrolysis of Ala-|-Gly bond in repressor LexA.. Functionally, represses a number of genes involved in the response to DNA damage (SOS response), including recA and lexA. In the presence of single-stranded DNA, RecA interacts with LexA causing an autocatalytic cleavage which disrupts the DNA-binding part of LexA, leading to derepression of the SOS regulon and eventually DNA repair. This chain is LexA repressor, found in Halorhodospira halophila (strain DSM 244 / SL1) (Ectothiorhodospira halophila (strain DSM 244 / SL1)).